A 497-amino-acid chain; its full sequence is Cobyric acid synthase (497 aa).

Residues 251–443 (DLKIGVVWYP…LHGLFDNDFF (193 aa)) enclose the GATase cobBQ-type domain. C333 functions as the Nucleophile in the catalytic mechanism. Residue H435 is part of the active site.

It belongs to the CobB/CobQ family. CobQ subfamily.

The protein operates within cofactor biosynthesis; adenosylcobalamin biosynthesis. Functionally, catalyzes amidations at positions B, D, E, and G on adenosylcobyrinic A,C-diamide. NH(2) groups are provided by glutamine, and one molecule of ATP is hydrogenolyzed for each amidation. The chain is Cobyric acid synthase from Carboxydothermus hydrogenoformans (strain ATCC BAA-161 / DSM 6008 / Z-2901).